The chain runs to 171 residues: Neuronal vesicle trafficking-associated protein 2 (171 aa).

A disordered region spans residues 1–21 (MVKLNSNPGEKGAKPPSVEDG). Residues 1–71 (MVKLNSNPGE…FRVPKIAEFT (71 aa)) are Cytoplasmic-facing. The helical; Signal-anchor for type II membrane protein transmembrane segment at 72-92 (VTILVSLALAFLACIVFLVVY) threads the bilayer. At 93 to 171 (KAFTYDHSCP…EPKPPKTQGH (79 aa)) the chain is on the lumenal side.

This sequence belongs to the NSG family. Specifically expressed in neural and neuroendocrine tissues. Pituitary and less in adrenal gland and testis. Expressed in the hippocampus throughout development. Remains enriched in layer V cortical neurons during development. At P0, broadly expressed in the neocortex. Is down-regulated overall at P8 and P14, but remains relatively enriched in layer V. At P0 is lower expressed in the cerebellum. Expression remains low throughout development, and is undetectable by adulthood.

Its subcellular location is the membrane. The protein resides in the golgi apparatus. It is found in the trans-Golgi network membrane. The protein localises to the cell projection. It localises to the dendrite. Its subcellular location is the endosome membrane. The protein resides in the early endosome membrane. It is found in the late endosome membrane. The protein localises to the lysosome lumen. It localises to the cytoplasmic vesicle membrane. Its subcellular location is the golgi stack membrane. The protein resides in the endosome. It is found in the multivesicular body membrane. The polypeptide is Neuronal vesicle trafficking-associated protein 2 (Mus musculus (Mouse)).